We begin with the raw amino-acid sequence, 671 residues long: Acetyl-coenzyme A synthetase (671 aa).

The tract at residues 1 to 21 (MPTASASESSSNQPESSNASG) is disordered. CoA-binding positions include 221–224 (RRGK), threonine 339, and asparagine 363. ATP contacts are provided by residues 415–417 (GEG), 439–444 (DTWWQT), aspartate 528, and arginine 543. Serine 551 contributes to the CoA binding site. Arginine 554 serves as a coordination point for ATP. 3 residues coordinate Mg(2+): valine 565, histidine 567, and valine 570. Arginine 611 is a binding site for CoA. An N6-acetyllysine modification is found at lysine 636.

This sequence belongs to the ATP-dependent AMP-binding enzyme family. The cofactor is Mg(2+). Post-translationally, acetylated. Deacetylation by the SIR2-homolog deacetylase activates the enzyme.

The enzyme catalyses acetate + ATP + CoA = acetyl-CoA + AMP + diphosphate. Functionally, catalyzes the conversion of acetate into acetyl-CoA (AcCoA), an essential intermediate at the junction of anabolic and catabolic pathways. AcsA undergoes a two-step reaction. In the first half reaction, AcsA combines acetate with ATP to form acetyl-adenylate (AcAMP) intermediate. In the second half reaction, it can then transfer the acetyl group from AcAMP to the sulfhydryl group of CoA, forming the product AcCoA. The protein is Acetyl-coenzyme A synthetase of Rhodopirellula baltica (strain DSM 10527 / NCIMB 13988 / SH1).